Here is a 64-residue protein sequence, read N- to C-terminus: Large ribosomal subunit protein eL24 (64 aa).

Zn(2+) is bound by residues Cys6, Cys9, Cys32, and Cys36. The C4-type zinc finger occupies 6-36 (CNFCGKSIEPGTGKKFVKKDGSVMFICSSKC).

It belongs to the eukaryotic ribosomal protein eL24 family. As to quaternary structure, part of the 50S ribosomal subunit. Forms a cluster with proteins L3 and L14. Zn(2+) is required as a cofactor.

In terms of biological role, binds to the 23S rRNA. The protein is Large ribosomal subunit protein eL24 of Methanococcus aeolicus (strain ATCC BAA-1280 / DSM 17508 / OCM 812 / Nankai-3).